A 190-amino-acid polypeptide reads, in one-letter code: Protein GrpE (190 aa).

Residues 1 to 31 are compositionally biased toward basic and acidic residues; that stretch reads MTEEQKKYEDAENLESKSENPEEASAEKSEN. Residues 1-39 form a disordered region; it reads MTEEQKKYEDAENLESKSENPEEASAEKSENGVEDLQAE.

This sequence belongs to the GrpE family. In terms of assembly, homodimer.

The protein resides in the cytoplasm. In terms of biological role, participates actively in the response to hyperosmotic and heat shock by preventing the aggregation of stress-denatured proteins, in association with DnaK and GrpE. It is the nucleotide exchange factor for DnaK and may function as a thermosensor. Unfolded proteins bind initially to DnaJ; upon interaction with the DnaJ-bound protein, DnaK hydrolyzes its bound ATP, resulting in the formation of a stable complex. GrpE releases ADP from DnaK; ATP binding to DnaK triggers the release of the substrate protein, thus completing the reaction cycle. Several rounds of ATP-dependent interactions between DnaJ, DnaK and GrpE are required for fully efficient folding. The protein is Protein GrpE of Zymomonas mobilis subsp. mobilis (strain ATCC 31821 / ZM4 / CP4).